Here is a 237-residue protein sequence, read N- to C-terminus: Sugar fermentation stimulation protein homolog (237 aa).

This sequence belongs to the SfsA family.

This Actinobacillus pleuropneumoniae serotype 5b (strain L20) protein is Sugar fermentation stimulation protein homolog.